The sequence spans 457 residues: SH3 domain-binding protein 5 (457 aa).

The segment covering 1–12 (MDTALKRSRSEE) has biased composition (basic and acidic residues). Residues 1–68 (MDTALKRSRS…DDINRRETEL (68 aa)) form a disordered region. Acidic residues predominate over residues 25-43 (EKEEEEERMEQGLEEEEEV). The segment at 33–267 (MEQGLEEEEE…EIHERRRSNA (235 aa)) is sufficient for interaction with RAB11A and for guanine nucleotide exchange activity. The segment covering 44 to 53 (DPRIQGELEK) has biased composition (basic and acidic residues). Coiled coils occupy residues 46 to 92 (RIQG…LAKK), 99 to 147 (DSKP…RLLE), 156 to 202 (AWQE…LEKK), and 213 to 257 (YFEL…RISD). A compositionally biased stretch (acidic residues) spans 308–319 (NCGNLVSEDDSE). The segment at 308 to 347 (NCGNLVSEDDSETQSVSSFSSGPTSPSEMPDQFPAVARPG) is disordered. Low complexity predominate over residues 322–334 (SVSSFSSGPTSPS). Residue S353 is modified to Phosphoserine; by MAPK12 and MAPK9. A disordered region spans residues 371-427 (SECSGASSPECEVERGDRAEGAENKMSDKANNNRVLSSTSAGGGRSRSQSSTSLEGQ). 2 positions are modified to phosphoserine: S377 and S378. The segment covering 382 to 398 (EVERGDRAEGAENKMSD) has biased composition (basic and acidic residues). The segment covering 406–427 (LSSTSAGGGRSRSQSSTSLEGQ) has biased composition (low complexity). At S420 the chain carries Phosphoserine. S423 bears the Phosphoserine; by MAPK12 mark.

The protein belongs to the SH3BP5 family. As to quaternary structure, interacts with BTK. Interacts with all isoforms of MAPK8, MAPK9, MAPK10 and MAPK12. Interacts with GDP-bound and nucleotide-free forms of RAB11A.

The protein resides in the cytoplasmic vesicle membrane. The protein localises to the mitochondrion. Functions as a guanine nucleotide exchange factor (GEF) with specificity for RAB11A and RAB25. Inhibits the auto- and transphosphorylation activity of BTK. Plays a negative regulatory role in BTK-related cytoplasmic signaling in B-cells. May be involved in BCR-induced apoptotic cell death. In Rattus norvegicus (Rat), this protein is SH3 domain-binding protein 5 (Sh3bp5).